The sequence spans 944 residues: Protein translocase subunit SecA (944 aa).

Residues Q77, 95–99, and D484 contribute to the ATP site; that span reads GEGKT. The segment at 920–944 is disordered; it reads EQEKQTRKKKKKKPHEDESSKTKIG. The segment covering 933–944 has biased composition (basic and acidic residues); that stretch reads PHEDESSKTKIG.

It belongs to the SecA family. Monomer and homodimer. Part of the essential Sec protein translocation apparatus which comprises SecA, SecYEG and auxiliary proteins SecDF. Other proteins may also be involved.

Its subcellular location is the cell membrane. It localises to the cytoplasm. It catalyses the reaction ATP + H2O + cellular proteinSide 1 = ADP + phosphate + cellular proteinSide 2.. Functionally, part of the Sec protein translocase complex. Interacts with the SecYEG preprotein conducting channel. Has a central role in coupling the hydrolysis of ATP to the transfer of proteins into and across the cell membrane, serving as an ATP-driven molecular motor driving the stepwise translocation of polypeptide chains across the membrane. This chain is Protein translocase subunit SecA, found in Mycoplasma mycoides subsp. mycoides SC (strain CCUG 32753 / NCTC 10114 / PG1).